A 547-amino-acid polypeptide reads, in one-letter code: Chaperonin GroEL (547 aa).

ATP contacts are provided by residues 30–33 (TLGP), Lys51, 87–91 (DGTTT), Gly415, 479–481 (NAA), and Asp495. The interval 525-547 (PKEDSPGAGAGMGGMGGMGGMDM) is disordered. Gly residues predominate over residues 532-547 (AGAGMGGMGGMGGMDM).

Belongs to the chaperonin (HSP60) family. Forms a cylinder of 14 subunits composed of two heptameric rings stacked back-to-back. Interacts with the co-chaperonin GroES.

The protein localises to the cytoplasm. It carries out the reaction ATP + H2O + a folded polypeptide = ADP + phosphate + an unfolded polypeptide.. Its function is as follows. Together with its co-chaperonin GroES, plays an essential role in assisting protein folding. The GroEL-GroES system forms a nano-cage that allows encapsulation of the non-native substrate proteins and provides a physical environment optimized to promote and accelerate protein folding. The chain is Chaperonin GroEL from Nitrosomonas eutropha (strain DSM 101675 / C91 / Nm57).